The following is a 1141-amino-acid chain: cGMP-inhibited 3',5'-cyclic phosphodiesterase 3A (1141 aa).

The interval 1-42 is disordered; it reads MAVRGEAAQDLAKPGLGGASPARVARGNHRHRGESSPSPRGS. A helical transmembrane segment spans residues 62–82; sequence SALCAGSLSVLLALLVRLVGG. Positions 90-111 are disordered; sequence KSQEAAAEEEEEEGARGGVFPG. 5 helical membrane-spanning segments follow: residues 127-147, 157-177, 182-202, 207-227, and 229-249; these read LQPA…GLCL, AVAL…SLGV, LLSL…TWLV, LGVL…VSLE, and FKVA…LLLA. Residue serine 310 is modified to Phosphoserine. Low complexity predominate over residues 433 to 445; it reads RVSSTWTTTTSAT. The disordered stretch occupies residues 433–483; sequence RVSSTWTTTTSATGLPTLEPAPVRRDRSASIKPHEAPSPSAVNPDSWNAPG. A compositionally biased stretch (basic and acidic residues) spans 454–467; it reads PVRRDRSASIKPHE. Residues 472–483 are compositionally biased toward polar residues; sequence SAVNPDSWNAPG. Serine 492, serine 520, serine 524, and serine 533 each carry phosphoserine. The disordered stretch occupies residues 505 to 654; the sequence is VKAKKQNRPG…CQREPQRKAS (150 aa). A compositionally biased stretch (pro residues) spans 522-532; sequence VPSPSSSPPQG. The segment covering 533–544 has biased composition (low complexity); it reads SPASSPVSNSAS. Residues 618–637 are compositionally biased toward polar residues; the sequence is TSQVTSDYETNNNSDSSDIL. The interval 669–1141 is interaction with SLFN12; the sequence is KPILAPEPLV…EETLAPQPDL (473 aa). The region spanning 674-1093 is the PDEase domain; that stretch reads PEPLVMDNLD…MMWKKVIEEE (420 aa). Histidine 752 acts as the Proton donor in catalysis. Histidine 752 is a binding site for AMP. Mn(2+) is bound by residues histidine 756, histidine 836, aspartate 837, and aspartate 950. AMP-binding residues include aspartate 837, aspartate 950, and glutamine 1001. Aspartate 837 lines the Mg(2+) pocket. Disordered regions lie at residues 1024 to 1060 and 1120 to 1141; these read GKWV…SSIA and KEEE…QPDL. Residues 1029–1046 show a composition bias toward acidic residues; it reads DSDDSGDTDDPEEEEEEA. A Phosphoserine modification is found at serine 1033. Residue threonine 1036 is modified to Phosphothreonine. Lysine 1120 participates in a covalent cross-link: Glycyl lysine isopeptide (Lys-Gly) (interchain with G-Cter in SUMO2).

Belongs to the cyclic nucleotide phosphodiesterase family. PDE3 subfamily. The cofactor is Mn(2+). Mg(2+) serves as cofactor.

It is found in the membrane. Its subcellular location is the cytoplasm. The protein localises to the cytosol. The catalysed reaction is a nucleoside 3',5'-cyclic phosphate + H2O = a nucleoside 5'-phosphate + H(+). It carries out the reaction 3',5'-cyclic AMP + H2O = AMP + H(+). It catalyses the reaction 3',5'-cyclic GMP + H2O = GMP + H(+). The enzyme catalyses 3',5'-cyclic UMP + H2O = UMP + H(+). With respect to regulation, inhibited by cGMP. Cyclic nucleotide phosphodiesterase with specificity for the second messengers cAMP and cGMP, which are key regulators of many important physiological processes. Also has activity toward cUMP. Independently of its catalytic activity it is part of an E2/17beta-estradiol-induced pro-apoptotic signaling pathway. E2 stabilizes the PDE3A/SLFN12 complex in the cytosol, promoting the dephosphorylation of SLFN12 and activating its pro-apoptotic ribosomal RNA/rRNA ribonuclease activity. This apoptotic pathway might be relevant in tissues with high concentration of E2 and be for instance involved in placenta remodeling. In Mus musculus (Mouse), this protein is cGMP-inhibited 3',5'-cyclic phosphodiesterase 3A.